We begin with the raw amino-acid sequence, 142 residues long: Peptide methionine sulfoxide reductase MsrB (142 aa).

The region spanning 2 to 125 is the MsrB domain; sequence IKKDKNELNE…NSAAIQFIPY (124 aa). Residue C114 is the Nucleophile of the active site.

This sequence belongs to the MsrB Met sulfoxide reductase family.

The enzyme catalyses L-methionyl-[protein] + [thioredoxin]-disulfide + H2O = L-methionyl-(R)-S-oxide-[protein] + [thioredoxin]-dithiol. The sequence is that of Peptide methionine sulfoxide reductase MsrB from Staphylococcus haemolyticus (strain JCSC1435).